A 147-amino-acid polypeptide reads, in one-letter code: E3 ubiquitin-protein ligase RHA2B (147 aa).

The RING-type; atypical zinc finger occupies 74-116 (CIVCLSKLKTGEEVRKLDCRHVFHKQCLEGWLQHLNFNCPLCR).

As to quaternary structure, interacts with NAC19. In terms of tissue distribution, expressed in vascular tissue, root tips, embryos and pistils.

The protein localises to the cytoplasm. Its subcellular location is the nucleus. The catalysed reaction is S-ubiquitinyl-[E2 ubiquitin-conjugating enzyme]-L-cysteine + [acceptor protein]-L-lysine = [E2 ubiquitin-conjugating enzyme]-L-cysteine + N(6)-ubiquitinyl-[acceptor protein]-L-lysine.. It participates in protein modification; protein ubiquitination. In terms of biological role, E3 ubiquitin-protein ligase involved in the positive regulation of abscisic acid (ABA) signaling and responses to salt and osmotic stresses during seed germination and early seedling development. Acts additively with RHA2A in regulating ABA signaling and drought response. Possesses E3 ubiquitin ligase activity in vitro. In Arabidopsis thaliana (Mouse-ear cress), this protein is E3 ubiquitin-protein ligase RHA2B.